The chain runs to 270 residues: Phospholysine phosphohistidine inorganic pyrophosphate phosphatase (270 aa).

Mg(2+)-binding residues include Asp17 and Ser19. Residues 17–19 (DIS), 54–55 (TN), and Lys189 contribute to the substrate site. Asp214 contacts Mg(2+).

This sequence belongs to the HAD-like hydrolase superfamily. As to quaternary structure, homodimer. The cofactor is Mg(2+). In terms of tissue distribution, detected in liver (at protein level).

The protein localises to the cytoplasm. The protein resides in the nucleus. It catalyses the reaction diphosphate + H2O = 2 phosphate + H(+). Phosphatase that hydrolyzes imidodiphosphate, 3-phosphohistidine and 6-phospholysine. Has broad substrate specificity and can also hydrolyze inorganic diphosphate, but with lower efficiency. The polypeptide is Phospholysine phosphohistidine inorganic pyrophosphate phosphatase (LHPP) (Bos taurus (Bovine)).